The sequence spans 876 residues: Leucine--tRNA ligase (876 aa).

The 'HIGH' region motif lies at 43–53 (PYPSGRIHMGH). The 'KMSKS' region motif lies at 632-636 (KMSKS). K635 contacts ATP.

The protein belongs to the class-I aminoacyl-tRNA synthetase family.

The protein localises to the cytoplasm. The catalysed reaction is tRNA(Leu) + L-leucine + ATP = L-leucyl-tRNA(Leu) + AMP + diphosphate. This Rhizobium etli (strain CIAT 652) protein is Leucine--tRNA ligase.